Here is a 3462-residue protein sequence, read N- to C-terminus: DNA-directed RNA polymerase subunit beta'' (3462 aa).

Residues C263, C335, C342, and C345 each contribute to the Zn(2+) site. An insert-1 region spans residues 541–1085; sequence KIDDQELSSV…PNKIFSSNLF (545 aa). The segment at 1528-1585 is insert-2; sequence PQSANERKQILKKARQKLRLFPLNLNEKKNRFSSVTLDLLRDQTTLHKMQSCGEAESG. Residues 1602-1699 form an insert-3 region; it reads KKITEIFTFC…FSKQMGNRLL (98 aa). An insert-4 region spans residues 1938-2168; it reads LKNKMNQSFS…SQASWILETN (231 aa). The segment at 2320–2870 is insert-5; that stretch reads NLVSGKLNFL…KKKIAKEGAF (551 aa). The interval 2972 to 3196 is insert-6; the sequence is SKSQRGWFHN…IGQLLRYGKE (225 aa).

This sequence belongs to the RNA polymerase beta' chain family. RpoC2 subfamily. As to quaternary structure, in plastids the minimal PEP RNA polymerase catalytic core is composed of four subunits: alpha, beta, beta', and beta''. When a (nuclear-encoded) sigma factor is associated with the core the holoenzyme is formed, which can initiate transcription. It depends on Zn(2+) as a cofactor.

Its subcellular location is the plastid. The protein localises to the chloroplast. It catalyses the reaction RNA(n) + a ribonucleoside 5'-triphosphate = RNA(n+1) + diphosphate. In terms of biological role, DNA-dependent RNA polymerase catalyzes the transcription of DNA into RNA using the four ribonucleoside triphosphates as substrates. The chain is DNA-directed RNA polymerase subunit beta'' from Tupiella akineta (Green alga).